Here is a 411-residue protein sequence, read N- to C-terminus: LL-diaminopimelate aminotransferase (411 aa).

Residues Y15 and G42 each contribute to the substrate site. Pyridoxal 5'-phosphate-binding positions include Y72, 108–109 (AK), Y132, N187, Y218, and 246–248 (SFS). Positions 109, 132, and 187 each coordinate substrate. K249 carries the N6-(pyridoxal phosphate)lysine modification. Pyridoxal 5'-phosphate contacts are provided by R257 and N292. N292 and R388 together coordinate substrate.

This sequence belongs to the class-I pyridoxal-phosphate-dependent aminotransferase family. LL-diaminopimelate aminotransferase subfamily. In terms of assembly, homodimer. Pyridoxal 5'-phosphate serves as cofactor.

It carries out the reaction (2S,6S)-2,6-diaminopimelate + 2-oxoglutarate = (S)-2,3,4,5-tetrahydrodipicolinate + L-glutamate + H2O + H(+). It functions in the pathway amino-acid biosynthesis; L-lysine biosynthesis via DAP pathway; LL-2,6-diaminopimelate from (S)-tetrahydrodipicolinate (aminotransferase route): step 1/1. Involved in the synthesis of meso-diaminopimelate (m-DAP or DL-DAP), required for both lysine and peptidoglycan biosynthesis. Catalyzes the direct conversion of tetrahydrodipicolinate to LL-diaminopimelate. The chain is LL-diaminopimelate aminotransferase from Rippkaea orientalis (strain PCC 8801 / RF-1) (Cyanothece sp. (strain PCC 8801)).